The chain runs to 204 residues: Serotonin N-acetyltransferase (204 aa).

Phosphothreonine; by PKA is present on Thr-28. The region spanning Ser-32 to Gln-193 is the N-acetyltransferase domain. Leu-121 contacts substrate. Residues Leu-121–Val-123 and Gln-129–Pro-134 each bind acetyl-CoA. Substrate is bound at residue Met-156. Position 165 to 167 (Tyr-165 to Arg-167) interacts with acetyl-CoA. Position 202 is a phosphoserine (Ser-202).

The protein belongs to the acetyltransferase family. AANAT subfamily. Monomer. Interacts with several 14-3-3 proteins, including YWHAB, YWHAE, YWHAG and YWHAZ, preferentially when phosphorylated at Thr-28. Phosphorylation on Ser-202 also allows binding to YWHAZ, but with lower affinity. The interaction with YWHAZ considerably increases affinity for arylalkylamines and acetyl-CoA and protects the enzyme from dephosphorylation and proteasomal degradation. It may also prevent thiol-dependent inactivation. Post-translationally, cAMP-dependent phosphorylation regulates AANAT activity by promoting interaction with 14-3-3 proteins. Phosphorylation levels exhibit night/day variations, with an increase during nighttime. Highly expressed in pineal gland and in the photoreceptor outer segments in the retina. Expressed at about 100-fold lower levels in the pituitary gland and testis. Not detected in other tissues.

The protein resides in the cytoplasm. It carries out the reaction a 2-arylethylamine + acetyl-CoA = an N-acetyl-2-arylethylamine + CoA + H(+). The protein operates within aromatic compound metabolism; melatonin biosynthesis; melatonin from serotonin: step 1/2. In terms of biological role, controls the night/day rhythm of melatonin production in the pineal gland. Catalyzes the N-acetylation of serotonin into N-acetylserotonin, the penultimate step in the synthesis of melatonin. The chain is Serotonin N-acetyltransferase (AANAT) from Macaca mulatta (Rhesus macaque).